The primary structure comprises 152 residues: Ribosome maturation factor RimP (152 aa).

This sequence belongs to the RimP family.

It is found in the cytoplasm. Its function is as follows. Required for maturation of 30S ribosomal subunits. The chain is Ribosome maturation factor RimP from Pectobacterium atrosepticum (strain SCRI 1043 / ATCC BAA-672) (Erwinia carotovora subsp. atroseptica).